We begin with the raw amino-acid sequence, 741 residues long: Transketolase-1, chloroplastic (741 aa).

The transit peptide at 1–66 (MASTSSLALS…NRSLRPLVRA (66 aa)) directs the protein to the chloroplast. Residues 22–51 (GSDQRGSLPAFSGLKSTGSRASASSRRRIA) form a disordered region. The residue at position 67 (A67) is an N-acetylalanine. Position 103 (H103) interacts with substrate. Residues H143 and 192–194 (GPL) contribute to the thiamine diphosphate site. D233 is a binding site for Mg(2+). Residues G234 and N263 each coordinate thiamine diphosphate. Mg(2+) contacts are provided by N263 and I265. H340 serves as a coordination point for substrate. A thiamine diphosphate-binding site is contributed by H340. Residue S428 is modified to Phosphoserine. R434 and S461 together coordinate substrate. 2 residues coordinate thiamine diphosphate: E488 and F515. E488 acts as the Proton donor in catalysis. Substrate contacts are provided by H539, D547, and R598.

It belongs to the transketolase family. Homodimer. Mg(2+) serves as cofactor. The cofactor is Ca(2+). Requires Mn(2+) as cofactor. It depends on Co(2+) as a cofactor. Thiamine diphosphate is required as a cofactor.

It localises to the plastid. It is found in the chloroplast stroma. The catalysed reaction is D-sedoheptulose 7-phosphate + D-glyceraldehyde 3-phosphate = aldehydo-D-ribose 5-phosphate + D-xylulose 5-phosphate. Its pathway is carbohydrate biosynthesis; Calvin cycle. Its function is as follows. Catalyzes the reversible transfer of a two-carbon ketol group from fructose-6-phosphate or sedoheptulose-7-phosphate to glyceraldehyde-3-phosphate to yield xylulose-5-phosphate and erythrose-4-phosphate or ribose-5-phosphate, respectively. Could act as a stress sensor involved in adaptation process. In Arabidopsis thaliana (Mouse-ear cress), this protein is Transketolase-1, chloroplastic (TKL-1).